A 607-amino-acid chain; its full sequence is Elongation factor 4 (607 aa).

One can recognise a tr-type G domain in the interval 11–193 (KNIRNFSIIA…KIVEVVPPPE (183 aa)). GTP contacts are provided by residues 23 to 28 (DHGKST) and 140 to 143 (NKID).

The protein belongs to the TRAFAC class translation factor GTPase superfamily. Classic translation factor GTPase family. LepA subfamily.

It localises to the cell membrane. It carries out the reaction GTP + H2O = GDP + phosphate + H(+). Required for accurate and efficient protein synthesis under certain stress conditions. May act as a fidelity factor of the translation reaction, by catalyzing a one-codon backward translocation of tRNAs on improperly translocated ribosomes. Back-translocation proceeds from a post-translocation (POST) complex to a pre-translocation (PRE) complex, thus giving elongation factor G a second chance to translocate the tRNAs correctly. Binds to ribosomes in a GTP-dependent manner. This chain is Elongation factor 4, found in Staphylococcus saprophyticus subsp. saprophyticus (strain ATCC 15305 / DSM 20229 / NCIMB 8711 / NCTC 7292 / S-41).